Consider the following 769-residue polypeptide: 3-O-beta-D-glucopyranosyl-beta-D-glucuronide phosphorylase (769 aa).

D457 (proton donor) is an active-site residue.

The protein belongs to the glycosyl hydrolase 94 family. As to quaternary structure, homodimer.

The protein localises to the cytoplasm. The enzyme catalyses 3-O-beta-D-glucosyl-D-glucuronate + phosphate = aldehydo-D-glucuronate + alpha-D-glucose 1-phosphate. It catalyses the reaction a 3-O-beta-D-glucosyl-beta-D-glucuronoside + phosphate = a beta-D-glucuronoside + alpha-D-glucose 1-phosphate. Glycoside phosphorylase that catalyzes the reversible phosphorolysis of 3-O-beta-D-glucosyl-D-glucuronate into D-glucuronic acid and alpha-D-glucose 1-phosphate. Cannot phosphorolyze cellobionic acid and laminaribiose. In the reverse direction, using alpha-D-glucose 1-phosphate as a donor substrate, the enzyme acts on D-glucuronate and its artificial derivative p-nitrophenyl-beta-D-glucuronide. The apparent catalytic efficiency towards p-nitrophenyl-beta-D-glucuronide is approximately 5-fold higher than that towards D-glucuronic acid. Is probably involved in the metabolism of oligosaccharides containing the 3-O-beta-D-glucopyranosyl-beta-D-glucuronide structure released from bacterial and plant acidic carbohydrates. The protein is 3-O-beta-D-glucopyranosyl-beta-D-glucuronide phosphorylase of Paenibacillus borealis.